The chain runs to 387 residues: MQVFWFIPTHGDSRYLGTSEGAREVSFDYLKQVAVAADTLGYEGVLIPTGRSCEDPWVAASALAAVTQRLKFLVAVRPGLMAPTLAARMAATFDRISNGRLLINLVTGGDTAELEGDGLFLDHTARYEASAEFLRIWRQVLAASHDGDKVDYEGKHLSVKGATVLYPPLQQPHPPVYFGGSSAPAHALAGEQVDTYLTWGEPPADVAQKLDDVRRQAARHGRTVKFGIRLHVIVRETEAAAWAAADDLISRLDDETVARAQAVFAKMDSEGQRRMAALHAGGARRTREALEISPNLWAGVGLVRGGAGTALVGDPHTVAERMREYAELGIDTFVLSGYPHLEEAYRFAELVFPLLPRSVRDKLPGKVLSGPFGEVMATGIVPRAAQS.

It belongs to the SsuD family.

It carries out the reaction an alkanesulfonate + FMNH2 + O2 = an aldehyde + FMN + sulfite + H2O + 2 H(+). Functionally, catalyzes the desulfonation of aliphatic sulfonates. The protein is Alkanesulfonate monooxygenase of Cupriavidus necator (strain ATCC 17699 / DSM 428 / KCTC 22496 / NCIMB 10442 / H16 / Stanier 337) (Ralstonia eutropha).